The sequence spans 106 residues: Small ribosomal subunit protein bS18 (106 aa).

The span at 1–22 shows a compositional bias: basic and acidic residues; the sequence is MSEETTVRPERTERSERPERPQ. A disordered region spans residues 1 to 34; the sequence is MSEETTVRPERTERSERPERPQYRGNGPRKRRPF.

The protein belongs to the bacterial ribosomal protein bS18 family. As to quaternary structure, part of the 30S ribosomal subunit. Forms a tight heterodimer with protein bS6.

Binds as a heterodimer with protein bS6 to the central domain of the 16S rRNA, where it helps stabilize the platform of the 30S subunit. The chain is Small ribosomal subunit protein bS18 from Geobacter metallireducens (strain ATCC 53774 / DSM 7210 / GS-15).